The chain runs to 113 residues: Iron-sulfur cluster insertion protein ErpA (113 aa).

Iron-sulfur cluster-binding residues include Cys-41, Cys-105, and Cys-107.

Belongs to the HesB/IscA family. As to quaternary structure, homodimer. It depends on iron-sulfur cluster as a cofactor.

Its function is as follows. Required for insertion of 4Fe-4S clusters for at least IspG. The protein is Iron-sulfur cluster insertion protein ErpA of Mannheimia succiniciproducens (strain KCTC 0769BP / MBEL55E).